A 311-amino-acid chain; its full sequence is Coelenterazine h 2-monooxygenase (311 aa).

Residues 45–291 form the AB hydrolase-1 domain; the sequence is NAVIFLHGNA…KGLHFSQEDA (247 aa). Residues D162 and H285 each coordinate substrate.

As to quaternary structure, monomer.

The enzyme catalyses coelenterazine h + O2 = excited coelenteramide h monoanion + hnu + CO2 + H(+). Upon binding the substrate, the enzyme catalyzes an oxygenation, producing a very short-lived hydroperoxide that cyclizes into a dioxetanone structure, which collapses, releasing a CO(2) molecule. The spontaneous breakdown of the dioxetanone releases the energy (about 50 kcal/mole) that is necessary to generate the excited state of the coelenteramide product, which is the singlet form of the monoanion. In vivo the product undergoes the process of nonradiative energy transfer to an accessory protein, a green fluorescent protein (GFP), which results in green bioluminescence. In vitro, in the absence of GFP, the product emits blue light. This Renilla reniformis (Sea pansy) protein is Coelenterazine h 2-monooxygenase.